A 450-amino-acid polypeptide reads, in one-letter code: 3-keto-steroid reductase erg27 (450 aa).

NADP(+) is bound by residues Leu25, Thr53, and Lys59. Residues Ser215 and Tyr238 each act as proton donor in the active site. NADP(+) is bound by residues Tyr238, Lys242, and Thr296. Lys242 serves as the catalytic Lowers pKa of active site Tyr.

Belongs to the short-chain dehydrogenases/reductases (SDR) family. ERG27 subfamily. In terms of assembly, heterotetramer of erg25, erg26, erg27 and erg28. Erg28 acts as a scaffold to tether erg27 and other 4,4-demethylation-related enzymes, forming a demethylation enzyme complex, in the endoplasmic reticulum.

It is found in the endoplasmic reticulum membrane. Its subcellular location is the lipid droplet. Its pathway is steroid metabolism; ergosterol biosynthesis. Its function is as follows. Sterol-C4-methyl oxidase; part of the third module of ergosterol biosynthesis pathway that includes the late steps of the pathway. Erg27 is a catalytic component of the C-4 demethylation complex that catalyzes the conversion of 4,4-dimethylfecosterol into fecosterol via 4-methylfecosterol. The third module or late pathway involves the ergosterol synthesis itself through consecutive reactions that mainly occur in the endoplasmic reticulum (ER) membrane. Firstly, the squalene synthase erg9 catalyzes the condensation of 2 farnesyl pyrophosphate moieties to form squalene, which is the precursor of all steroids. Squalene synthase is crucial for balancing the incorporation of farnesyl diphosphate (FPP) into sterol and nonsterol isoprene synthesis. Secondly, squalene is converted into lanosterol by the consecutive action of the squalene epoxidase erg1 and the lanosterol synthase erg7. Then, the delta(24)-sterol C-methyltransferase erg6 methylates lanosterol at C-24 to produce eburicol. Eburicol is the substrate of the sterol 14-alpha demethylase encoded by cyp51A and cyp51B, to yield 4,4,24-trimethyl ergosta-8,14,24(28)-trienol. The C-14 reductase erg24 then reduces the C14=C15 double bond which leads to 4,4-dimethylfecosterol. A sequence of further demethylations at C-4, involving the C-4 demethylation complex containing the C-4 methylsterol oxidases erg25A or erg25B, the sterol-4-alpha-carboxylate 3-dehydrogenase erg26 and the 3-keto-steroid reductase erg27, leads to the production of fecosterol via 4-methylfecosterol. The C-8 sterol isomerase erg2 then catalyzes the reaction which results in unsaturation at C-7 in the B ring of sterols and thus converts fecosterol to episterol. The sterol-C5-desaturase erg3B then catalyzes the introduction of a C-5 double bond in the B ring to produce 5-dehydroepisterol. The 2 other sterol-C5-desaturases, erg3A and erg3C, seem to be less important in ergosterol biosynthesis. The C-22 sterol desaturase erg5 further converts 5-dehydroepisterol into ergosta-5,7,22,24(28)-tetraen-3beta-ol by forming the C-22(23) double bond in the sterol side chain. Finally, ergosta-5,7,22,24(28)-tetraen-3beta-ol is substrate of the C-24(28) sterol reductases erg4A and erg4B to produce ergosterol. Possible alternative sterol biosynthetic pathways might exist from fecosterol to ergosterol, depending on the activities of the erg3 isoforms. In Aspergillus fumigatus (strain ATCC MYA-4609 / CBS 101355 / FGSC A1100 / Af293) (Neosartorya fumigata), this protein is 3-keto-steroid reductase erg27.